The sequence spans 362 residues: uncharacterized protein (362 aa).

Belongs to the carbohydrate kinase PfkB family.

This is an uncharacterized protein from Escherichia coli (strain K12).